Reading from the N-terminus, the 205-residue chain is Thiamine-phosphate synthase (205 aa).

4-amino-2-methyl-5-(diphosphooxymethyl)pyrimidine-binding positions include 37 to 41 and N69; that span reads QVREK. Residues D70 and D89 each contribute to the Mg(2+) site. Position 108 (S108) interacts with 4-amino-2-methyl-5-(diphosphooxymethyl)pyrimidine. 134-136 serves as a coordination point for 2-[(2R,5Z)-2-carboxy-4-methylthiazol-5(2H)-ylidene]ethyl phosphate; that stretch reads TGS. K137 contributes to the 4-amino-2-methyl-5-(diphosphooxymethyl)pyrimidine binding site. Residues G165 and 185-186 contribute to the 2-[(2R,5Z)-2-carboxy-4-methylthiazol-5(2H)-ylidene]ethyl phosphate site; that span reads IS.

Belongs to the thiamine-phosphate synthase family. It depends on Mg(2+) as a cofactor.

The enzyme catalyses 2-[(2R,5Z)-2-carboxy-4-methylthiazol-5(2H)-ylidene]ethyl phosphate + 4-amino-2-methyl-5-(diphosphooxymethyl)pyrimidine + 2 H(+) = thiamine phosphate + CO2 + diphosphate. It carries out the reaction 2-(2-carboxy-4-methylthiazol-5-yl)ethyl phosphate + 4-amino-2-methyl-5-(diphosphooxymethyl)pyrimidine + 2 H(+) = thiamine phosphate + CO2 + diphosphate. It catalyses the reaction 4-methyl-5-(2-phosphooxyethyl)-thiazole + 4-amino-2-methyl-5-(diphosphooxymethyl)pyrimidine + H(+) = thiamine phosphate + diphosphate. It functions in the pathway cofactor biosynthesis; thiamine diphosphate biosynthesis; thiamine phosphate from 4-amino-2-methyl-5-diphosphomethylpyrimidine and 4-methyl-5-(2-phosphoethyl)-thiazole: step 1/1. In terms of biological role, condenses 4-methyl-5-(beta-hydroxyethyl)thiazole monophosphate (THZ-P) and 2-methyl-4-amino-5-hydroxymethyl pyrimidine pyrophosphate (HMP-PP) to form thiamine monophosphate (TMP). The polypeptide is Thiamine-phosphate synthase (Clostridium botulinum (strain Langeland / NCTC 10281 / Type F)).